Consider the following 393-residue polypeptide: S-adenosylmethionine synthase (393 aa).

E9 serves as a coordination point for Mg(2+). H15 serves as a coordination point for ATP. E43 is a K(+) binding site. L-methionine contacts are provided by E56 and Q99. ATP is bound by residues 167 to 169, 235 to 238, D246, 252 to 253, A269, K273, and K277; these read DGK, SGRF, and RK. L-methionine is bound at residue D246. Position 277 (K277) interacts with L-methionine.

It belongs to the AdoMet synthase family. As to quaternary structure, homotetramer. It depends on Mn(2+) as a cofactor. Mg(2+) is required as a cofactor. The cofactor is Co(2+). K(+) serves as cofactor.

It is found in the cytoplasm. The catalysed reaction is L-methionine + ATP + H2O = S-adenosyl-L-methionine + phosphate + diphosphate. Its pathway is amino-acid biosynthesis; S-adenosyl-L-methionine biosynthesis; S-adenosyl-L-methionine from L-methionine: step 1/1. Its function is as follows. Catalyzes the formation of S-adenosylmethionine from methionine and ATP. The reaction comprises two steps that are both catalyzed by the same enzyme: formation of S-adenosylmethionine (AdoMet) and triphosphate, and subsequent hydrolysis of the triphosphate. The sequence is that of S-adenosylmethionine synthase (SAMS) from Solanum palustre (Non-tuber-performing potato).